The primary structure comprises 399 residues: Ribonuclease T2-like 1-A (399 aa).

Residues Met1 to Ala17 form the signal peptide. 5 disulfides stabilise this stretch: Cys24-Cys43, Cys32-Cys79, Cys42-Cys150, Cys87-Cys142, and Cys214-Cys249. Residues His72, Glu135, and His139 contribute to the active site. The interval Lys259–Ser279 is disordered. Residues Ser262–Ser279 show a composition bias toward low complexity. An N-linked (GlcNAc...) asparagine glycan is attached at Asn291.

The protein belongs to the RNase T2 family.

It localises to the vacuole lumen. The protein resides in the cytoplasm. It catalyses the reaction a ribonucleotidyl-ribonucleotide-RNA + H2O = a 3'-end 3'-phospho-ribonucleotide-RNA + a 5'-end dephospho-ribonucleoside-RNA + H(+). Its function is as follows. Rnase which modulates cell survival under stress conditions. Released from the vacuole to the cytoplasm during stress to promote tRNA and rRNA cleavage and to activate separately a downstream pathway that promotes cell death. Involved in cell size, vacuolar morphology and growth at high temperatures and high salt concentration. The protein is Ribonuclease T2-like 1-A (RNY1-A) of Candida albicans (strain SC5314 / ATCC MYA-2876) (Yeast).